We begin with the raw amino-acid sequence, 155 residues long: Small ribosomal subunit protein uS7 (155 aa).

This sequence belongs to the universal ribosomal protein uS7 family. Part of the 30S ribosomal subunit. Contacts proteins S9 and S11.

One of the primary rRNA binding proteins, it binds directly to 16S rRNA where it nucleates assembly of the head domain of the 30S subunit. Is located at the subunit interface close to the decoding center, probably blocks exit of the E-site tRNA. This is Small ribosomal subunit protein uS7 from Desulforapulum autotrophicum (strain ATCC 43914 / DSM 3382 / VKM B-1955 / HRM2) (Desulfobacterium autotrophicum).